The primary structure comprises 172 residues: Adenine phosphoribosyltransferase (172 aa).

Belongs to the purine/pyrimidine phosphoribosyltransferase family. In terms of assembly, homodimer.

It is found in the cytoplasm. It carries out the reaction AMP + diphosphate = 5-phospho-alpha-D-ribose 1-diphosphate + adenine. Its pathway is purine metabolism; AMP biosynthesis via salvage pathway; AMP from adenine: step 1/1. Functionally, catalyzes a salvage reaction resulting in the formation of AMP, that is energically less costly than de novo synthesis. The polypeptide is Adenine phosphoribosyltransferase (Clostridium novyi (strain NT)).